The primary structure comprises 590 residues: Sperm-associated microtubule inner protein 4 (590 aa).

Thr-219 carries the phosphothreonine modification. Phosphoserine occurs at positions 407 and 422. Lys-427 is covalently cross-linked (Glycyl lysine isopeptide (Lys-Gly) (interchain with G-Cter in SUMO2)). A Phosphotyrosine modification is found at Tyr-442. Ser-485 is subject to Phosphoserine. Lys-545 participates in a covalent cross-link: Glycyl lysine isopeptide (Lys-Gly) (interchain with G-Cter in SUMO2). Ser-547 carries the phosphoserine modification.

In terms of tissue distribution, predominantly expressed in the testes.

The protein resides in the cytoplasm. Its subcellular location is the cytoskeleton. It localises to the microtubule organizing center. It is found in the centrosome. The protein localises to the flagellum axoneme. Functionally, microtubule inner protein (MIP) part of the dynein-decorated doublet microtubules (DMTs) in flagellum axoneme. May serve to reinforce and thus stabilize the microtubule structure in the sperm flagella. The sequence is that of Sperm-associated microtubule inner protein 4 from Homo sapiens (Human).